Reading from the N-terminus, the 377-residue chain is Histone deacetylase 8 (377 aa).

The tract at residues 14 to 324 is histone deacetylase; the sequence is LVPVYIYSPE…WTYLTGVILG (311 aa). Ser39 is modified (phosphoserine). Asp101 contributes to the substrate binding site. The Proton acceptor role is filled by His143. Gly151 is a binding site for substrate. A divalent metal cation-binding residues include Asp178, His180, and Asp267. Residue Tyr306 participates in substrate binding.

Belongs to the histone deacetylase family. HD type 1 subfamily. In terms of assembly, interacts with PEPB2-MYH11, a fusion protein consisting of the 165 N-terminal residues of CBF-beta (PEPB2) with the tail region of MYH11 produced by the inversion Inv(16)(p13q22), a translocation associated with acute myeloid leukemia of M4EO subtype. The PEPB2-MYH1 fusion protein also interacts with RUNX1, a well known transcriptional regulator, suggesting that the interaction with HDAC8 may participate in the conversion of RUNX1 into a constitutive transcriptional repressor. Interacts with CBFA2T3. Interacts with phosphorylated SMG5/EST1B; this interaction protects SMG5 from ubiquitin-mediated degradation. Associates with alpha-SMA (smooth muscle alpha-actin). The cofactor is a divalent metal cation. Post-translationally, phosphorylated by PKA on serine 39. Phosphorylation reduces deacetylase activity observed preferentially on histones H3 and H4. Weakly expressed in most tissues. Expressed at higher level in heart, brain, kidney and pancreas and also in liver, lung, placenta, prostate and kidney.

It is found in the nucleus. It localises to the chromosome. The protein localises to the cytoplasm. It catalyses the reaction N(6)-acetyl-L-lysyl-[histone] + H2O = L-lysyl-[histone] + acetate. It carries out the reaction N(6)-acetyl-L-lysyl-[protein] + H2O = L-lysyl-[protein] + acetate. The catalysed reaction is N(6)-(2E)-butenoyl-L-lysyl-[protein] + H2O = (2E)-2-butenoate + L-lysyl-[protein]. With respect to regulation, its activity is inhibited by trichostatin A (TSA), suberoylanilide hydroxamic acid (SAHA), 3-(1-methyl-4-phenylacetyl-1H-2-pyrrolyl)-N-hydroxy-2-propenamide (APHA), 4-dimethylamino-N-(6-hydroxycarbamoyethyl)benzamide-N-hydroxy-7-(4-dimethylaminobenzoyl)aminoheptanamide (MS-344), 5-(4-methyl-benzoylamino)-biphenyl-3,4'-dicarboxylic acid 3-dimethylamide 4'-hydroxyamide (CRA-A) and butyrate. Functionally, histone deacetylase that catalyzes the deacetylation of lysine residues on the N-terminal part of the core histones (H2A, H2B, H3 and H4). Histone deacetylation gives a tag for epigenetic repression and plays an important role in transcriptional regulation, cell cycle progression and developmental events. Histone deacetylases act via the formation of large multiprotein complexes. Also involved in the deacetylation of cohesin complex protein SMC3 regulating release of cohesin complexes from chromatin. May play a role in smooth muscle cell contractility. In addition to protein deacetylase activity, also has protein-lysine deacylase activity: acts as a protein decrotonylase by mediating decrotonylation ((2E)-butenoyl) of histones. This chain is Histone deacetylase 8, found in Homo sapiens (Human).